The primary structure comprises 209 residues: MKKLLLTLAMVPAVLFSPTAWGDATDDLLGRLQTLESMKGGFEQVVLDQSGTHMQEALGKFQVARGNRFYWLTETPYEQMAASDGTTVWVYDKDLEQVVVRPLSQDLGQTPALLFGGKPADVAKAFTISERDNRGAEVTYRLTPKGQDPLFDQLDVTFKGGQPASMRLQDALGQQTVIDFIGLTLNDGIDSSLFHFDPPEGTDVIQQQQ.

An N-terminal signal peptide occupies residues 1 to 22 (MKKLLLTLAMVPAVLFSPTAWG).

Belongs to the LolA family. Monomer.

It localises to the periplasm. In terms of biological role, participates in the translocation of lipoproteins from the inner membrane to the outer membrane. Only forms a complex with a lipoprotein if the residue after the N-terminal Cys is not an aspartate (The Asp acts as a targeting signal to indicate that the lipoprotein should stay in the inner membrane). This chain is Outer-membrane lipoprotein carrier protein, found in Alcanivorax borkumensis (strain ATCC 700651 / DSM 11573 / NCIMB 13689 / SK2).